The following is a 433-amino-acid chain: Glucoside xylosyltransferase 1 (433 aa).

At 1–6 (MRRFAR) the chain is on the cytoplasmic side. A helical; Signal-anchor for type II membrane protein transmembrane segment spans residues 7–29 (VALLFLGCGVCSLLYGVSQLALS). The Lumenal portion of the chain corresponds to 30 to 433 (LEQEAGGARQ…DLSVRRSKGS (404 aa)). The disordered stretch occupies residues 39–64 (QRQARESAAPGGGRQAGSADGGEEGA). Asn69, Asn166, Asn271, Asn305, and Asn380 each carry an N-linked (GlcNAc...) asparagine glycan.

It belongs to the glycosyltransferase 8 family.

The protein localises to the membrane. It catalyses the reaction 3-O-(beta-D-glucosyl)-L-seryl-[EGF-like domain protein] + UDP-alpha-D-xylose = 3-O-[alpha-D-xylosyl-(1-&gt;3)-beta-D-glucosyl]-L-seryl-[EGF-like domain protein] + UDP + H(+). Glycosyltransferase which elongates the O-linked glucose attached to EGF-like repeats in the extracellular domain of Notch proteins by catalyzing the addition of xylose. The sequence is that of Glucoside xylosyltransferase 1 (GXYLT1) from Gallus gallus (Chicken).